Consider the following 430-residue polypeptide: Serine--tRNA ligase (430 aa).

Residue 237–239 (TAE) participates in L-serine binding. 268–270 (RRE) contacts ATP. E291 contributes to the L-serine binding site. 355-358 (EISS) is an ATP binding site. S391 lines the L-serine pocket.

It belongs to the class-II aminoacyl-tRNA synthetase family. Type-1 seryl-tRNA synthetase subfamily. Homodimer. The tRNA molecule binds across the dimer.

The protein resides in the cytoplasm. The catalysed reaction is tRNA(Ser) + L-serine + ATP = L-seryl-tRNA(Ser) + AMP + diphosphate + H(+). It catalyses the reaction tRNA(Sec) + L-serine + ATP = L-seryl-tRNA(Sec) + AMP + diphosphate + H(+). It functions in the pathway aminoacyl-tRNA biosynthesis; selenocysteinyl-tRNA(Sec) biosynthesis; L-seryl-tRNA(Sec) from L-serine and tRNA(Sec): step 1/1. Its function is as follows. Catalyzes the attachment of serine to tRNA(Ser). Is also able to aminoacylate tRNA(Sec) with serine, to form the misacylated tRNA L-seryl-tRNA(Sec), which will be further converted into selenocysteinyl-tRNA(Sec). The chain is Serine--tRNA ligase from Magnetococcus marinus (strain ATCC BAA-1437 / JCM 17883 / MC-1).